Here is a 503-residue protein sequence, read N- to C-terminus: Probable cytosol aminopeptidase (503 aa).

The Mn(2+) site is built by Lys270 and Asp275. Lys282 is a catalytic residue. Mn(2+) contacts are provided by Asp293, Asp352, and Glu354. Residue Arg356 is part of the active site.

It belongs to the peptidase M17 family. Mn(2+) is required as a cofactor.

Its subcellular location is the cytoplasm. The enzyme catalyses Release of an N-terminal amino acid, Xaa-|-Yaa-, in which Xaa is preferably Leu, but may be other amino acids including Pro although not Arg or Lys, and Yaa may be Pro. Amino acid amides and methyl esters are also readily hydrolyzed, but rates on arylamides are exceedingly low.. It catalyses the reaction Release of an N-terminal amino acid, preferentially leucine, but not glutamic or aspartic acids.. Functionally, presumably involved in the processing and regular turnover of intracellular proteins. Catalyzes the removal of unsubstituted N-terminal amino acids from various peptides. The sequence is that of Probable cytosol aminopeptidase from Salmonella typhi.